Reading from the N-terminus, the 224-residue chain is UPF0758 protein Pfl01_5539 (224 aa).

The region spanning 102 to 224 (ALENPQVVRD…PLSMAECGWM (123 aa)) is the MPN domain. 3 residues coordinate Zn(2+): histidine 173, histidine 175, and aspartate 186. The short motif at 173–186 (HNHPSGNSDPSQAD) is the JAMM motif element.

This sequence belongs to the UPF0758 family.

The protein is UPF0758 protein Pfl01_5539 of Pseudomonas fluorescens (strain Pf0-1).